The primary structure comprises 220 residues: MNSAKLIDHTLLKPESTRTQIDQIIDEAKAYHFKSVCVNPTHVKYAAERLADSEVLVCTVIGFPLGASTTATKAFETEDAIQNGADEIDMVINIGALKDGRFDDVQQDIEAVVKAAKGHTVKVIIETVLLDHDEIVKASELTKVAGADFVKTSTGFAGGGATAEDVKLMKDTVGADVEVKASGGVRNLEDFNKMVEAGATRIGASAGVQIMQGLEADSDY.

Asp89 (proton donor/acceptor) is an active-site residue. Lys151 acts as the Schiff-base intermediate with acetaldehyde in catalysis. Lys180 functions as the Proton donor/acceptor in the catalytic mechanism.

Belongs to the DeoC/FbaB aldolase family. DeoC type 1 subfamily.

Its subcellular location is the cytoplasm. The enzyme catalyses 2-deoxy-D-ribose 5-phosphate = D-glyceraldehyde 3-phosphate + acetaldehyde. Its pathway is carbohydrate degradation; 2-deoxy-D-ribose 1-phosphate degradation; D-glyceraldehyde 3-phosphate and acetaldehyde from 2-deoxy-alpha-D-ribose 1-phosphate: step 2/2. Catalyzes a reversible aldol reaction between acetaldehyde and D-glyceraldehyde 3-phosphate to generate 2-deoxy-D-ribose 5-phosphate. The polypeptide is Deoxyribose-phosphate aldolase 2 (Staphylococcus aureus (strain N315)).